Reading from the N-terminus, the 318-residue chain is MDMRTTEQQYNPYRVFTRQQWAELRNDTPMTLEPGEFSKLRSMHDRLDLQEVEEIYLPLSRLLSMYVDAAQRLYYAQRQFLGIRDRKMPYIIGVAGSVSVGKSTTARVLQALLTRWSPRPKVDLITTDGFLYPNAVLERQGLMQKKGFPESYDLPRLLAFLSDIKAGRHPVRAPVYSHLSYDIVPNQWTEIDQPDILIVEGVNVLQTGPLPRDGKAVPVVSDFFDFSVYIDAEEAVLRRWYVKRFLSLRDTAFHDPRSYFNRYALLSDEEATATAIAIWERTNLANLEDNILPTRPRATLILKKGADHEIETVALRRL.

96–103 (GSVSVGKS) is an ATP binding site.

The protein belongs to the prokaryotic pantothenate kinase family.

It localises to the cytoplasm. The catalysed reaction is (R)-pantothenate + ATP = (R)-4'-phosphopantothenate + ADP + H(+). The protein operates within cofactor biosynthesis; coenzyme A biosynthesis; CoA from (R)-pantothenate: step 1/5. The chain is Pantothenate kinase from Bradyrhizobium sp. (strain ORS 278).